Consider the following 422-residue polypeptide: Serine--tRNA ligase (422 aa).

Position 229 to 231 (229 to 231) interacts with L-serine; that stretch reads TAE. 260–262 serves as a coordination point for ATP; it reads RKE. Glu283 contributes to the L-serine binding site. 347–350 serves as a coordination point for ATP; it reads EISS. An L-serine-binding site is contributed by Ser383.

The protein belongs to the class-II aminoacyl-tRNA synthetase family. Type-1 seryl-tRNA synthetase subfamily. As to quaternary structure, homodimer. The tRNA molecule binds across the dimer.

It is found in the cytoplasm. It carries out the reaction tRNA(Ser) + L-serine + ATP = L-seryl-tRNA(Ser) + AMP + diphosphate + H(+). The enzyme catalyses tRNA(Sec) + L-serine + ATP = L-seryl-tRNA(Sec) + AMP + diphosphate + H(+). Its pathway is aminoacyl-tRNA biosynthesis; selenocysteinyl-tRNA(Sec) biosynthesis; L-seryl-tRNA(Sec) from L-serine and tRNA(Sec): step 1/1. Its function is as follows. Catalyzes the attachment of serine to tRNA(Ser). Is also able to aminoacylate tRNA(Sec) with serine, to form the misacylated tRNA L-seryl-tRNA(Sec), which will be further converted into selenocysteinyl-tRNA(Sec). This Citrifermentans bemidjiense (strain ATCC BAA-1014 / DSM 16622 / JCM 12645 / Bem) (Geobacter bemidjiensis) protein is Serine--tRNA ligase.